A 438-amino-acid chain; its full sequence is ATP-dependent RNA helicase RhlB (438 aa).

Residues 9–37 carry the Q motif motif; the sequence is QRFADLPLHPEVKQALAENGFEFCTPIQA. The Helicase ATP-binding domain occupies 40 to 219; the sequence is LPVLLQSKDI…YDHMNEPVKV (180 aa). 53–60 serves as a coordination point for ATP; that stretch reads AQTGTGKT. Positions 165–168 match the DEAD box motif; sequence DEAD. The Helicase C-terminal domain occupies 243 to 390; it reads KMRLLLTLIE…VSNYDSEALL (148 aa). The segment at 395–438 is disordered; it reads TPAKIHRKHPSGTRNLRDRSGASRPGAQRSGARPPRHDRTRRHS. A compositionally biased stretch (basic residues) spans 428-438; that stretch reads PPRHDRTRRHS.

This sequence belongs to the DEAD box helicase family. RhlB subfamily. Component of the RNA degradosome, which is a multiprotein complex involved in RNA processing and mRNA degradation.

It is found in the cytoplasm. The catalysed reaction is ATP + H2O = ADP + phosphate + H(+). In terms of biological role, DEAD-box RNA helicase involved in RNA degradation. Has RNA-dependent ATPase activity and unwinds double-stranded RNA. The sequence is that of ATP-dependent RNA helicase RhlB from Shewanella baltica (strain OS185).